An 80-amino-acid polypeptide reads, in one-letter code: Protein Vpu (80 aa).

Residues 1-6 are Extracellular-facing; it reads MQSLIA. Residues 7-27 traverse the membrane as a helical segment; it reads AIVALVVVAIIAIVVWSIVFI. The Cytoplasmic portion of the chain corresponds to 28–80; sequence EYRKILRQRKIDRLIDRIRERAEDSGNESEGDQEELSALVEMGHDAPWDIDDL. The disordered stretch occupies residues 49-80; the sequence is AEDSGNESEGDQEELSALVEMGHDAPWDIDDL. Phosphoserine; by host CK2 occurs at positions 52 and 56. The span at 52 to 62 shows a compositional bias: acidic residues; sequence SGNESEGDQEE.

It belongs to the HIV-1 VPU protein family. Homopentamer. Interacts with host CD4 and BRTC; these interactions induce proteasomal degradation of CD4. Interacts with host BST2; this interaction leads to the degradation of host BST2. Interacts with host FBXW11. Interacts with host AP1M1; this interaction plays a role in the mistrafficking and subsequent degradation of host BST2. Interacts with host RANBP2; this interaction allows Vpu to down-regulate host BLM sumoylation. Phosphorylated by host CK2. This phosphorylation is necessary for interaction with human BTRC and degradation of CD4.

The protein localises to the host membrane. With respect to regulation, ion channel activity is inhibited by hexamethylene amiloride in vitro. Its function is as follows. Enhances virion budding by targeting host CD4 and Tetherin/BST2 to proteasome degradation. Degradation of CD4 prevents any unwanted premature interactions between viral Env and its host receptor CD4 in the endoplasmic reticulum. Degradation of antiretroviral protein Tetherin/BST2 is important for virion budding, as BST2 tethers new viral particles to the host cell membrane. Mechanistically, Vpu bridges either CD4 or BST2 to BTRC, a substrate recognition subunit of the Skp1/Cullin/F-box protein E3 ubiquitin ligase, induces their ubiquitination and subsequent proteasomal degradation. The alteration of the E3 ligase specificity by Vpu seems to promote the degradation of host IKBKB, leading to NF-kappa-B down-regulation and subsequent apoptosis. Acts as a viroporin that forms an oligomeric ion channel in membranes. Modulates the host DNA repair mechanisms to promote degradation of nuclear viral cDNA in cells that are already productively infected in order to suppress immune sensing and proviral hyper-integration (superinfection). Manipulates PML-NBs and modulates SUMOylation of host BLM protein thereby enhancing its DNA-end processing activity toward viral unintegrated linear DNA. Also inhibits RAD52-mediated homologous repair of viral cDNA, preventing the generation of dead-end circular forms of single copies of the long terminal repeat and permitting sustained nucleolytic attack. This is Protein Vpu from Human immunodeficiency virus type 1 group M subtype B (isolate JH32) (HIV-1).